A 163-amino-acid polypeptide reads, in one-letter code: Large ribosomal subunit protein uL15 (163 aa).

The segment covering 27 to 37 (SGLGKTAGRGQ) has biased composition (gly residues). Residues 27-46 (SGLGKTAGRGQKGQKSRSGV) are disordered.

Belongs to the universal ribosomal protein uL15 family. As to quaternary structure, part of the 50S ribosomal subunit.

Functionally, binds to the 23S rRNA. The sequence is that of Large ribosomal subunit protein uL15 from Zymomonas mobilis subsp. mobilis (strain ATCC 31821 / ZM4 / CP4).